Reading from the N-terminus, the 287-residue chain is Thymidylate synthase (287 aa).

A dUMP-binding site is contributed by Arg21. Asn51 is a binding site for (6R)-5,10-methylene-5,6,7,8-tetrahydrofolate. Arg150–Arg151 contributes to the dUMP binding site. The active-site Nucleophile is Cys170. Residues Arg190–Asp193, Asn201, and His231–Tyr233 contribute to the dUMP site. Asp193 provides a ligand contact to (6R)-5,10-methylene-5,6,7,8-tetrahydrofolate. Ala286 is a (6R)-5,10-methylene-5,6,7,8-tetrahydrofolate binding site.

It belongs to the thymidylate synthase family. Bacterial-type ThyA subfamily. In terms of assembly, homodimer.

Its subcellular location is the cytoplasm. The catalysed reaction is dUMP + (6R)-5,10-methylene-5,6,7,8-tetrahydrofolate = 7,8-dihydrofolate + dTMP. It participates in pyrimidine metabolism; dTTP biosynthesis. Catalyzes the reductive methylation of 2'-deoxyuridine-5'-monophosphate (dUMP) to 2'-deoxythymidine-5'-monophosphate (dTMP) while utilizing 5,10-methylenetetrahydrofolate (mTHF) as the methyl donor and reductant in the reaction, yielding dihydrofolate (DHF) as a by-product. This enzymatic reaction provides an intracellular de novo source of dTMP, an essential precursor for DNA biosynthesis. In Mycoplasma genitalium (strain ATCC 33530 / DSM 19775 / NCTC 10195 / G37) (Mycoplasmoides genitalium), this protein is Thymidylate synthase.